The primary structure comprises 504 residues: Ectoine/proline transporter ProP (504 aa).

The next 11 helical transmembrane spans lie at 41-61 (FMEW…TAVF), 71-91 (LLAV…GGLV), 118-138 (LIGL…LLYL), 169-189 (FFGA…ASVV), 207-227 (DFGW…AVYL), 272-292 (LLIG…LTSY), 309-329 (AAVT…VGMW), 337-357 (PVYA…FLIM), 362-382 (IGAV…YVAL), 399-419 (GMGI…PLIT), and 430-450 (IVPA…LLFM). Positions 477–504 (NQDEDPNIDLSHMPFPDEENVGAEKQNA) are disordered.

This sequence belongs to the major facilitator superfamily.

The protein resides in the cell membrane. Uptake is activated by osmotic stress. Inhibited by CCCP. Functionally, involved in the uptake of osmoprotectants. Can transport ectoine and proline. Protons are probably the coupling ions. In Corynebacterium glutamicum (strain ATCC 13032 / DSM 20300 / JCM 1318 / BCRC 11384 / CCUG 27702 / LMG 3730 / NBRC 12168 / NCIMB 10025 / NRRL B-2784 / 534), this protein is Ectoine/proline transporter ProP.